Here is a 460-residue protein sequence, read N- to C-terminus: Trigger factor (460 aa).

In terms of domain architecture, PPIase FKBP-type spans 166 to 245 (DDFLTIDITA…VKAVKERELP (80 aa)). Residues 434–460 (AAEEAAAGEANEEADVVASDDPAAVKF) are disordered. Low complexity predominate over residues 449-460 (VVASDDPAAVKF).

The protein belongs to the FKBP-type PPIase family. Tig subfamily.

It is found in the cytoplasm. The enzyme catalyses [protein]-peptidylproline (omega=180) = [protein]-peptidylproline (omega=0). In terms of biological role, involved in protein export. Acts as a chaperone by maintaining the newly synthesized protein in an open conformation. Functions as a peptidyl-prolyl cis-trans isomerase. The polypeptide is Trigger factor (Paenarthrobacter aurescens (strain TC1)).